The following is a 122-amino-acid chain: MIQQQTMLTVADNTGARKLMCIRVLGSSGRRYASLGDVIVGVVKDALPNMPVKKSDVVKAVVIRTVDTVRRPDGMCIRFDDNAAVIINDDGNPRGTRVFGPVARELREKNFTKIISLAPEVL.

The protein belongs to the universal ribosomal protein uL14 family. In terms of assembly, part of the 50S ribosomal subunit. Forms a cluster with proteins L3 and L19. In the 70S ribosome, L14 and L19 interact and together make contacts with the 16S rRNA in bridges B5 and B8.

Its function is as follows. Binds to 23S rRNA. Forms part of two intersubunit bridges in the 70S ribosome. This is Large ribosomal subunit protein uL14 from Synechococcus sp. (strain JA-3-3Ab) (Cyanobacteria bacterium Yellowstone A-Prime).